A 139-amino-acid polypeptide reads, in one-letter code: Putative pre-16S rRNA nuclease (139 aa).

This sequence belongs to the YqgF nuclease family.

The protein resides in the cytoplasm. In terms of biological role, could be a nuclease involved in processing of the 5'-end of pre-16S rRNA. In Pectobacterium carotovorum subsp. carotovorum (strain PC1), this protein is Putative pre-16S rRNA nuclease.